A 275-amino-acid chain; its full sequence is Shikimate dehydrogenase (NADP(+)) (275 aa).

Residues 19-21 (SKS) and T66 each bind shikimate. The Proton acceptor role is filled by K70. E82 is an NADP(+) binding site. 2 residues coordinate shikimate: N91 and D106. NADP(+) is bound by residues 130–134 (GAGGA), 154–159 (NRTASK), and M217. Y219 is a shikimate binding site. G241 provides a ligand contact to NADP(+).

This sequence belongs to the shikimate dehydrogenase family. As to quaternary structure, homodimer.

It catalyses the reaction shikimate + NADP(+) = 3-dehydroshikimate + NADPH + H(+). It participates in metabolic intermediate biosynthesis; chorismate biosynthesis; chorismate from D-erythrose 4-phosphate and phosphoenolpyruvate: step 4/7. In terms of biological role, involved in the biosynthesis of the chorismate, which leads to the biosynthesis of aromatic amino acids. Catalyzes the reversible NADPH linked reduction of 3-dehydroshikimate (DHSA) to yield shikimate (SA). The sequence is that of Shikimate dehydrogenase (NADP(+)) from Colwellia psychrerythraea (strain 34H / ATCC BAA-681) (Vibrio psychroerythus).